The chain runs to 202 residues: IMP cyclohydrolase (202 aa).

The interval 29–52 (VQRDGTVTVEPTPDAPETDNPYIS) is disordered.

Belongs to the archaeal IMP cyclohydrolase family.

The enzyme catalyses IMP + H2O = 5-formamido-1-(5-phospho-D-ribosyl)imidazole-4-carboxamide. It participates in purine metabolism; IMP biosynthesis via de novo pathway; IMP from 5-formamido-1-(5-phospho-D-ribosyl)imidazole-4-carboxamide: step 1/1. Catalyzes the cyclization of 5-formylamidoimidazole-4-carboxamide ribonucleotide to IMP. The chain is IMP cyclohydrolase from Haloarcula marismortui (strain ATCC 43049 / DSM 3752 / JCM 8966 / VKM B-1809) (Halobacterium marismortui).